Consider the following 2185-residue polypeptide: Genome polyprotein (2185 aa).

The N-myristoyl glycine; by host moiety is linked to residue glycine 2. The Cytoplasmic portion of the chain corresponds to 2 to 1495 (GAQVSTQKTG…HVSRAFICLQ (1494 aa)). Positions 568–584 (FFQGPVEDAITAAIGRV) are amphipathic alpha-helix. Catalysis depends on for protease 2A activity residues histidine 872 and aspartate 890. The Zn(2+) site is built by cysteine 907 and cysteine 909. Catalysis depends on cysteine 961, which acts as the For protease 2A activity. Cysteine 967 and histidine 969 together coordinate Zn(2+). The interval 1101 to 1173 (NNGWLKKFTE…EQSAPSQSDQ (73 aa)) is membrane-binding. Residues 1101–1239 (NNGWLKKFTE…SPGAGKSVAT (139 aa)) are oligomerization. The segment at 1122–1126 (AIKIQ) is RNA-binding. The SF3 helicase domain maps to 1205–1361 (EKKMSNYIQF…SMYSQNGKIN (157 aa)). The Zn(2+) site is built by cysteine 1369, cysteine 1381, and cysteine 1386. The C4-type; degenerate zinc-finger motif lies at 1369 to 1386 (CDEECCPVNFKKCCPLVC). The segment at 1413-1420 (EYNHRHSV) is RNA-binding. The interval 1424–1429 (LEALFQ) is oligomerization. Residues 1496-1511 (AITTFVSVAGIIYIIY) lie within the membrane without spanning it. At 1512-2185 (KLFAGFQGAY…TIRRKWLDSF (674 aa)) the chain is on the cytoplasmic side. Position 1521 is an O-(5'-phospho-RNA)-tyrosine (tyrosine 1521). Residues 1541–1719 (GPAFEFAVAM…FSAALLKHYF (179 aa)) form the Peptidase C3 domain. Active-site for protease 3C activity residues include histidine 1580, glutamate 1611, and cysteine 1687. The 117-residue stretch at 1950-2066 (GHLIAFDYSG…SYPWPIDASL (117 aa)) folds into the RdRp catalytic domain. 2 residues coordinate Mg(2+): aspartate 1956 and aspartate 2052.

The protein belongs to the picornaviruses polyprotein family. Interacts with capsid protein VP1 and capsid protein VP3 to form heterotrimeric protomers. As to quaternary structure, interacts with capsid protein VP0, and capsid protein VP3 to form heterotrimeric protomers. Five protomers subsequently associate to form pentamers which serve as building blocks for the capsid. Interacts with capsid protein VP2, capsid protein VP3 and capsid protein VP4 following cleavage of capsid protein VP0. Interacts with host CD55. Interacts with host CXADR. In terms of assembly, interacts with capsid protein VP1 and capsid protein VP3 in the mature capsid. Interacts with capsid protein VP0 and capsid protein VP1 to form heterotrimeric protomers. Five protomers subsequently associate to form pentamers which serve as building blocks for the capsid. Interacts with capsid protein VP4 in the mature capsid. Interacts with protein 2C; this interaction may be important for virion morphogenesis. As to quaternary structure, interacts with capsid protein VP1 and capsid protein VP3. In terms of assembly, homodimer. Homohexamer; forms a hexameric ring structure with 6-fold symmetry characteristic of AAA+ ATPases. Interacts (via N-terminus) with host RTN3 (via reticulon domain); this interaction is important for viral replication. Interacts with capsid protein VP3; this interaction may be important for virion morphogenesis. As to quaternary structure, interacts with protein 3CD. In terms of assembly, homodimer. Interacts with host GBF1. Interacts (via GOLD domain) with host ACBD3 (via GOLD domain); this interaction allows the formation of a viral protein 3A/ACBD3 heterotetramer with a 2:2 stoichiometry, which will stimulate the recruitment of host PI4KB in order to synthesize PI4P at the viral RNA replication sites. Interacts with RNA-directed RNA polymerase. As to quaternary structure, interacts with host TICAM1 (via C-terminus). In terms of assembly, interacts with protein 3AB and with RNA-directed RNA polymerase. Interacts with Viral protein genome-linked and with protein 3CD. Requires Mg(2+) as cofactor. Post-translationally, specific enzymatic cleavages in vivo by the viral proteases yield processing intermediates and the mature proteins. Myristoylation is required for the formation of pentamers during virus assembly. Further assembly of 12 pentamers and a molecule of genomic RNA generates the provirion. In terms of processing, during virion maturation, immature virions are rendered infectious following cleavage of VP0 into VP4 and VP2. This maturation seems to be an autocatalytic event triggered by the presence of RNA in the capsid and it is followed by a conformational change infectious virion. Post-translationally, myristoylation is required during RNA encapsidation and formation of the mature virus particle. VPg is uridylylated by the polymerase into VPg-pUpU. This acts as a nucleotide-peptide primer for the genomic RNA replication.

The protein resides in the virion. It localises to the host cytoplasm. It is found in the host cytoplasmic vesicle membrane. Its subcellular location is the host nucleus. The enzyme catalyses a ribonucleoside 5'-triphosphate + H2O = a ribonucleoside 5'-diphosphate + phosphate + H(+). It carries out the reaction Selective cleavage of Tyr-|-Gly bond in the picornavirus polyprotein.. It catalyses the reaction RNA(n) + a ribonucleoside 5'-triphosphate = RNA(n+1) + diphosphate. The catalysed reaction is Selective cleavage of Gln-|-Gly bond in the poliovirus polyprotein. In other picornavirus reactions Glu may be substituted for Gln, and Ser or Thr for Gly.. With respect to regulation, replication or transcription is subject to high level of random mutations by the nucleotide analog ribavirin. Forms an icosahedral capsid of pseudo T=3 symmetry with capsid proteins VP2 and VP3. The capsid is 300 Angstroms in diameter, composed of 60 copies of each capsid protein and enclosing the viral positive strand RNA genome. Capsid protein VP1 mainly forms the vertices of the capsid. Capsid protein VP1 interacts with host cell receptors CD55 and CXADR to provide virion attachment to target host cells. This attachment induces virion internalization. Tyrosine kinases are probably involved in the entry process. After binding to its receptor, the capsid undergoes conformational changes. Capsid protein VP1 N-terminus (that contains an amphipathic alpha-helix) and capsid protein VP4 are externalized. Together, they shape a pore in the host membrane through which viral genome is translocated to host cell cytoplasm. In terms of biological role, forms an icosahedral capsid of pseudo T=3 symmetry with capsid proteins VP2 and VP3. The capsid is 300 Angstroms in diameter, composed of 60 copies of each capsid protein and enclosing the viral positive strand RNA genome. Its function is as follows. Lies on the inner surface of the capsid shell. After binding to the host receptor, the capsid undergoes conformational changes. Capsid protein VP4 is released, Capsid protein VP1 N-terminus is externalized, and together, they shape a pore in the host membrane through which the viral genome is translocated into the host cell cytoplasm. Functionally, component of immature procapsids, which is cleaved into capsid proteins VP4 and VP2 after maturation. Allows the capsid to remain inactive before the maturation step. Cysteine protease that cleaves viral polyprotein and specific host proteins. It is responsible for the autocatalytic cleavage between the P1 and P2 regions, which is the first cleavage occurring in the polyprotein. Also cleaves the host translation initiation factor EIF4G1, in order to shut down the capped cellular mRNA translation. Inhibits the host nucleus-cytoplasm protein and RNA trafficking by cleaving host members of the nuclear pores. Counteracts stress granule formation probably by antagonizing its assembly or promoting its dissassembly. Cleaves and inhibits host IFIH1/MDA5, thereby inhibiting the type-I IFN production and the establishment of the antiviral state. Cleaves and inhibits host MAVS, thereby inhibiting the type-I IFN production and the establishment of the antiviral state. In terms of biological role, plays an essential role in the virus replication cycle by acting as a viroporin. Creates a pore in the host endoplasmic reticulum and as a consequence releases Ca2+ in the cytoplasm of infected cell. In turn, high levels of cytoplasmic calcium may trigger membrane trafficking and transport of viral ER-associated proteins to viroplasms, sites of viral genome replication. Its function is as follows. Induces and associates with structural rearrangements of intracellular membranes. Displays RNA-binding, nucleotide binding and NTPase activities. May play a role in virion morphogenesis and viral RNA encapsidation by interacting with the capsid protein VP3. Functionally, localizes the viral replication complex to the surface of membranous vesicles. Together with protein 3CD binds the Cis-Active RNA Element (CRE) which is involved in RNA synthesis initiation. Acts as a cofactor to stimulate the activity of 3D polymerase, maybe through a nucleid acid chaperone activity. Localizes the viral replication complex to the surface of membranous vesicles. It inhibits host cell endoplasmic reticulum-to-Golgi apparatus transport and causes the disassembly of the Golgi complex, possibly through GBF1 interaction. This would result in depletion of MHC, trail receptors and IFN receptors at the host cell surface. Plays an essential role in viral RNA replication by recruiting ACBD3 and PI4KB at the viral replication sites, thereby allowing the formation of the rearranged membranous structures where viral replication takes place. In terms of biological role, acts as a primer for viral RNA replication and remains covalently bound to viral genomic RNA. VPg is uridylylated prior to priming replication into VPg-pUpU. The oriI viral genomic sequence may act as a template for this. The VPg-pUpU is then used as primer on the genomic RNA poly(A) by the RNA-dependent RNA polymerase to replicate the viral genome. During genome replication, the VPg-RNA linkage is removed by the host TDP2, thereby accelerating replication. During the late stage of the replication cycle, host TDP2 is excluded from sites of viral RNA synthesis and encapsidation, allowing for the generation of progeny virions. Its function is as follows. Involved in the viral replication complex and viral polypeptide maturation. It exhibits protease activity with a specificity and catalytic efficiency that is different from protease 3C. Protein 3CD lacks polymerase activity. Protein 3CD binds to the 5'UTR of the viral genome. Functionally, major viral protease that mediates proteolytic processing of the polyprotein. Cleaves host EIF5B, contributing to host translation shutoff. Also cleaves host PABPC1, contributing to host translation shutoff. Cleaves and inhibits host RIGI, thereby inhibiting the type-I IFN production and the establishment of the antiviral state. Cleaves and inhibits host MAVS, thereby inhibiting the type-I IFN production and the establishment of the antiviral state. Cleaves and inhibits host TICAM1/TRIF, thereby inhibiting the type-I IFN production. Cleaves host NLRP1, triggers host N-glycine-mediated degradation of the autoinhibitory NLRP1 N-terminal fragment. Replicates the viral genomic RNA on the surface of intracellular membranes. May form linear arrays of subunits that propagate along a strong head-to-tail interaction called interface-I. Covalently attaches UMP to a tyrosine of VPg, which is used to prime RNA synthesis. The positive stranded RNA genome is first replicated at virus induced membranous vesicles, creating a dsRNA genomic replication form. This dsRNA is then used as template to synthesize positive stranded RNA genomes. ss(+)RNA genomes are either translated, replicated or encapsidated. This Homo sapiens (Human) protein is Genome polyprotein.